The chain runs to 340 residues: DNA-directed RNA polymerase subunit alpha (340 aa).

Positions 1–236 (MLSLSKNWNT…EQLQLFISFE (236 aa)) are alpha N-terminal domain (alpha-NTD). The alpha C-terminal domain (alpha-CTD) stretch occupies residues 251–340 (FAPYLLKRVD…LSKRYEDSYN (90 aa)).

The protein belongs to the RNA polymerase alpha chain family. As to quaternary structure, homodimer. The RNAP catalytic core consists of 2 alpha, 1 beta, 1 beta' and 1 omega subunit. When a sigma factor is associated with the core the holoenzyme is formed, which can initiate transcription.

It catalyses the reaction RNA(n) + a ribonucleoside 5'-triphosphate = RNA(n+1) + diphosphate. Functionally, DNA-dependent RNA polymerase catalyzes the transcription of DNA into RNA using the four ribonucleoside triphosphates as substrates. In Rickettsia peacockii (strain Rustic), this protein is DNA-directed RNA polymerase subunit alpha.